Here is a 244-residue protein sequence, read N- to C-terminus: Ribosomal RNA large subunit methyltransferase E (244 aa).

5 residues coordinate S-adenosyl-L-methionine: glycine 81, tryptophan 83, aspartate 109, aspartate 125, and aspartate 149. Catalysis depends on lysine 189, which acts as the Proton acceptor.

The protein belongs to the class I-like SAM-binding methyltransferase superfamily. RNA methyltransferase RlmE family.

The protein localises to the cytoplasm. It carries out the reaction uridine(2552) in 23S rRNA + S-adenosyl-L-methionine = 2'-O-methyluridine(2552) in 23S rRNA + S-adenosyl-L-homocysteine + H(+). Specifically methylates the uridine in position 2552 of 23S rRNA at the 2'-O position of the ribose in the fully assembled 50S ribosomal subunit. This chain is Ribosomal RNA large subunit methyltransferase E, found in Cereibacter sphaeroides (strain ATCC 17029 / ATH 2.4.9) (Rhodobacter sphaeroides).